The chain runs to 148 residues: MRAVVQRVSEAEVKVDGKIVGKISDGLMVLLGVQKDDTEKDLDWMLEKILNLRIFEDETGKMNLSLLEKGGQLMLVSQFTLLGDARKGRRPSFTEAAPPDKAKEIFDRFVKKASERVHVETGVFQAHMLVSLTNDGPVTILLDSRKQF.

Positions 136 to 137 match the Gly-cisPro motif, important for rejection of L-amino acids motif; sequence GP.

The protein belongs to the DTD family. Homodimer.

Its subcellular location is the cytoplasm. It catalyses the reaction glycyl-tRNA(Ala) + H2O = tRNA(Ala) + glycine + H(+). The catalysed reaction is a D-aminoacyl-tRNA + H2O = a tRNA + a D-alpha-amino acid + H(+). An aminoacyl-tRNA editing enzyme that deacylates mischarged D-aminoacyl-tRNAs. Also deacylates mischarged glycyl-tRNA(Ala), protecting cells against glycine mischarging by AlaRS. Acts via tRNA-based rather than protein-based catalysis; rejects L-amino acids rather than detecting D-amino acids in the active site. By recycling D-aminoacyl-tRNA to D-amino acids and free tRNA molecules, this enzyme counteracts the toxicity associated with the formation of D-aminoacyl-tRNA entities in vivo and helps enforce protein L-homochirality. The protein is D-aminoacyl-tRNA deacylase of Kosmotoga olearia (strain ATCC BAA-1733 / DSM 21960 / TBF 19.5.1).